Consider the following 397-residue polypeptide: Argininosuccinate synthase (397 aa).

9-17 contributes to the ATP binding site; that stretch reads AYSGGLDTS. Y86 serves as a coordination point for L-citrulline. G116 is a binding site for ATP. Residues T118, N122, and D123 each contribute to the L-aspartate site. N122 contributes to the L-citrulline binding site. The L-citrulline site is built by R126, S174, E259, and Y271.

It belongs to the argininosuccinate synthase family. Type 1 subfamily. In terms of assembly, homotetramer.

The protein localises to the cytoplasm. The catalysed reaction is L-citrulline + L-aspartate + ATP = 2-(N(omega)-L-arginino)succinate + AMP + diphosphate + H(+). It participates in amino-acid biosynthesis; L-arginine biosynthesis; L-arginine from L-ornithine and carbamoyl phosphate: step 2/3. The protein is Argininosuccinate synthase of Lactococcus lactis subsp. cremoris (strain SK11).